The primary structure comprises 359 residues: Chaperone protein DnaJ (359 aa).

In terms of domain architecture, J spans 3–68 (DYYEILGVPK…ERRQTYDRYG (66 aa)). The CR-type zinc finger occupies 128-205 (GVSKDIKYKI…CAGKGFIEEQ (78 aa)). Zn(2+) contacts are provided by Cys141, Cys144, Cys157, Cys160, Cys179, Cys182, Cys193, and Cys196. 4 CXXCXGXG motif repeats span residues 141–148 (CKTCDGTG), 157–164 (CPYCGGSG), 179–186 (CPFCKGSG), and 193–200 (CHDCAGKG).

It belongs to the DnaJ family. In terms of assembly, homodimer. The cofactor is Zn(2+).

The protein resides in the cytoplasm. Its function is as follows. Participates actively in the response to hyperosmotic and heat shock by preventing the aggregation of stress-denatured proteins and by disaggregating proteins, also in an autonomous, DnaK-independent fashion. Unfolded proteins bind initially to DnaJ; upon interaction with the DnaJ-bound protein, DnaK hydrolyzes its bound ATP, resulting in the formation of a stable complex. GrpE releases ADP from DnaK; ATP binding to DnaK triggers the release of the substrate protein, thus completing the reaction cycle. Several rounds of ATP-dependent interactions between DnaJ, DnaK and GrpE are required for fully efficient folding. Also involved, together with DnaK and GrpE, in the DNA replication of plasmids through activation of initiation proteins. The sequence is that of Chaperone protein DnaJ from Campylobacter hominis (strain ATCC BAA-381 / DSM 21671 / CCUG 45161 / LMG 19568 / NCTC 13146 / CH001A).